Here is a 257-residue protein sequence, read N- to C-terminus: Imidazole glycerol phosphate synthase subunit HisF (257 aa).

Catalysis depends on residues aspartate 11 and aspartate 130.

This sequence belongs to the HisA/HisF family. In terms of assembly, heterodimer of HisH and HisF.

The protein resides in the cytoplasm. It catalyses the reaction 5-[(5-phospho-1-deoxy-D-ribulos-1-ylimino)methylamino]-1-(5-phospho-beta-D-ribosyl)imidazole-4-carboxamide + L-glutamine = D-erythro-1-(imidazol-4-yl)glycerol 3-phosphate + 5-amino-1-(5-phospho-beta-D-ribosyl)imidazole-4-carboxamide + L-glutamate + H(+). Its pathway is amino-acid biosynthesis; L-histidine biosynthesis; L-histidine from 5-phospho-alpha-D-ribose 1-diphosphate: step 5/9. In terms of biological role, IGPS catalyzes the conversion of PRFAR and glutamine to IGP, AICAR and glutamate. The HisF subunit catalyzes the cyclization activity that produces IGP and AICAR from PRFAR using the ammonia provided by the HisH subunit. This is Imidazole glycerol phosphate synthase subunit HisF from Aliivibrio fischeri (strain MJ11) (Vibrio fischeri).